The sequence spans 563 residues: Probable ATP-dependent RNA helicase ddx51 (563 aa).

The short motif at 15 to 43 (NTLESFGIEEWLINNLKEQSIINLFPVQQ) is the Q motif element. Residues 48-276 (FINRTEGHDI…LLQLNAPLFF (229 aa)) enclose the Helicase ATP-binding domain. Position 61–68 (61–68 (APTGSGKT)) interacts with ATP. The DEAD box signature appears at 179 to 182 (DEAD). The region spanning 308 to 482 (LLNIIYESLL…SYKLGLNQMR (175 aa)) is the Helicase C-terminal domain. The segment at 493 to 537 (IGDNGDDNNDNNNEDGNEIDGSVENIENNNNNNNNNNKNNNNNNF) is disordered. Acidic residues predominate over residues 495–510 (DNGDDNNDNNNEDGNE). Low complexity predominate over residues 520–536 (NNNNNNNNNNKNNNNNN).

This sequence belongs to the DEAD box helicase family. DDX51/DBP6 subfamily.

It localises to the nucleus. The protein localises to the nucleolus. The catalysed reaction is ATP + H2O = ADP + phosphate + H(+). Functionally, probable ATP-binding RNA helicase which may be involved in ribosome biogenesis. The chain is Probable ATP-dependent RNA helicase ddx51 (ddx51) from Dictyostelium discoideum (Social amoeba).